The chain runs to 166 residues: Probable protein tyrosine phosphatase type IVA A (166 aa).

In terms of domain architecture, Tyrosine-protein phosphatase spans asparagine 10–arginine 164. A disulfide bridge links cysteine 52 with cysteine 107. Aspartate 75 acts as the Proton donor in catalysis. The active-site Phosphocysteine intermediate is cysteine 107. Valine 108–arginine 113 contacts phosphate. Position 113 (arginine 113) interacts with substrate. At cysteine 163 the chain carries Cysteine methyl ester. Cysteine 163 carries S-farnesyl cysteine lipidation. Positions arginine 164 to methionine 166 are cleaved as a propeptide — removed in mature form.

Belongs to the protein-tyrosine phosphatase family.

The protein resides in the membrane. The enzyme catalyses O-phospho-L-tyrosyl-[protein] + H2O = L-tyrosyl-[protein] + phosphate. The chain is Probable protein tyrosine phosphatase type IVA A from Dictyostelium discoideum (Social amoeba).